The chain runs to 1121 residues: CRISPR-associated endonuclease Cas9 1 (1121 aa).

D9 (for RuvC-like nuclease domain) is an active-site residue. Mg(2+) contacts are provided by D9, E509, and E513. Residues 516-684 enclose the HNH Cas9-type domain; it reads EDDEKKAIQK…VRKKFIERNL (169 aa). Catalysis depends on H599, which acts as the Proton acceptor for HNH nuclease domain. H738 contacts Mg(2+).

The protein belongs to the CRISPR-associated protein Cas9 family. Subtype II-A subfamily. Monomer. Binds crRNA and tracrRNA. It depends on Mg(2+) as a cofactor.

In terms of biological role, CRISPR (clustered regularly interspaced short palindromic repeat) is an adaptive immune system that provides protection against mobile genetic elements (viruses, transposable elements and conjugative plasmids). CRISPR clusters contain spacers, sequences complementary to antecedent mobile elements, and target invading nucleic acids. CRISPR clusters are transcribed and processed into CRISPR RNA (crRNA). In type II CRISPR systems correct processing of pre-crRNA requires a trans-encoded small RNA (tracrRNA), endogenous ribonuclease 3 (rnc) and this protein. The tracrRNA serves as a guide for ribonuclease 3-aided processing of pre-crRNA. Subsequently Cas9/crRNA/tracrRNA endonucleolytically cleaves linear or circular dsDNA target complementary to the spacer; Cas9 is inactive in the absence of the 2 guide RNAs (gRNA). Cas9 recognizes the protospacer adjacent motif (PAM) in the CRISPR repeat sequences to help distinguish self versus nonself, as targets within the bacterial CRISPR locus do not have PAMs. PAM recognition is also required for catalytic activity. Cuts target DNA when Cas9 and gRNAs are mixed. The polypeptide is CRISPR-associated endonuclease Cas9 1 (Streptococcus thermophilus (strain ATCC BAA-491 / LMD-9)).